A 204-amino-acid polypeptide reads, in one-letter code: Histone chaperone ASF1A (204 aa).

Positions 1–156 are interaction with histone H3, CHAF1B, and HIRA; sequence MAKVQVNNVV…TRFHINWEDN (156 aa). Residues 31–37 carry the Required for interaction with HIRA motif; it reads IEDLSED. The segment at 155–204 is required for interaction with HIRA; sequence DNTEKLEDAESSNPNLQSLLSTDALPSASKGWSTSENSLNVMLESHMDCM. At Ser192 the chain carries Phosphoserine.

The protein belongs to the ASF1 family. As to quaternary structure, interacts with histone H3 (via C-terminus), including histone H3.1, H3.2 and H3.3, and histone H4; the interaction with H3 is direct. Probably interacts with the heterodimeric form of H3-H4 taking the place of the second dimer. Interacts with the CHAF1A, CHAF1B and RBBP4 subunits of the CAF-1 complex. Interacts with CABIN1, HAT1, HIRA, NASP, TAF1 and UBN1. Found in a soluble complex with NASP and histones H3 and H4; the interaction with NASP is probably indirect and mediated by H3-H4. Interacts with CDAN1. Found in a cytosolic complex with IPO4 and histones H3 and H4. Interacts with CREBBP. Post-translationally, phosphorylated by TLK1 and TLK2. Highly phosphorylated in S-phase and at lower levels in M-phase. TLK2-mediated phosphorylation at Ser-192 prevents proteasome-dependent degradation. Phosphorylation at Ser-192 by PRKDC in response to DNA damage promotes the histone chaperone activity and ability to replace histones at double-strand breaks (DSBs) at stalled or collapsed replication forks, leading to RAD51 recruitment.

It localises to the nucleus. The protein localises to the chromosome. In terms of biological role, histone chaperone that facilitates histone deposition and histone exchange and removal during nucleosome assembly and disassembly. Cooperates with chromatin assembly factor 1 (CAF-1) to promote replication-dependent chromatin assembly and with HIRA to promote replication-independent chromatin assembly. Promotes homologous recombination-mediated repair of double-strand breaks (DSBs) at stalled or collapsed replication forks: acts by mediating histone replacement at DSBs, leading to recruitment of the MMS22L-TONSL complex and subsequent loading of RAD51. Also involved in the nuclear import of the histone H3-H4 dimer together with importin-4 (IPO4): specifically recognizes and binds newly synthesized histones with the monomethylation of H3 'Lys-9' and acetylation at 'Lys-14' (H3K9me1K14ac) marks, and diacetylation at 'Lys-5' and 'Lys-12' of H4 (H4K5K12ac) marks in the cytosol. Required for the formation of senescence-associated heterochromatin foci (SAHF) and efficient senescence-associated cell cycle exit. The polypeptide is Histone chaperone ASF1A (Mus musculus (Mouse)).